The primary structure comprises 530 residues: [Pyruvate dehydrogenase [acetyl-transferring]]-phosphatase 2, mitochondrial (530 aa).

The transit peptide at 1–67 directs the protein to the mitochondrion; it reads MSSTASYRIF…FALRKAYRHT (67 aa). Residues 107–518 form the PPM-type phosphatase domain; that stretch reads VLRFESNQLA…DDITVMVVFF (412 aa). 4 residues coordinate Mn(2+): Asp-142, Gly-143, Asp-413, and Asp-509.

This sequence belongs to the PP2C family. It depends on Mg(2+) as a cofactor. Highly expressed in liver.

The protein localises to the mitochondrion. The enzyme catalyses O-phospho-L-seryl-[pyruvate dehydrogenase E1 alpha subunit] + H2O = L-seryl-[pyruvate dehydrogenase E1 alpha subunit] + phosphate. With respect to regulation, mg(2+)-dependent protein phosphatase. Phosphatase activity is increased in the presence of spermine, a naturally produced polyamine. Its function is as follows. Mitochondrial enzyme that catalyzes the dephosphorylation and concomitant reactivation of the alpha subunit of the E1 component of the pyruvate dehydrogenase complex (PDC), thereby stimulating the conversion of pyruvate into acetyl-CoA. Acts as a crucial regulator of T cell metabolism and function, with a particular focus on T-helper Th17. The chain is [Pyruvate dehydrogenase [acetyl-transferring]]-phosphatase 2, mitochondrial (Pdp2) from Rattus norvegicus (Rat).